A 1470-amino-acid chain; its full sequence is Histone acetyltransferase HAC4 (1470 aa).

Residues Met-1–Asn-10 are compositionally biased toward polar residues. Disordered regions lie at residues Met-1–Ala-20 and Thr-342–Asn-376. Residues Ser-11 to Ala-20 show a composition bias toward low complexity. Positions Thr-342 to Gly-365 are enriched in polar residues. The TAZ-type 1 zinc finger occupies Gly-416–Val-495. Residues Ser-518 to Glu-566 are disordered. Basic residues predominate over residues Gln-522–Tyr-533. The PHD-type zinc-finger motif lies at His-764–Gln-841. Residues Val-856–Ala-1293 form the CBP/p300-type HAT domain. Acetyl-CoA contacts are provided by residues Leu-979–Ser-981, Arg-998–Thr-999, and Trp-1054. ZZ-type zinc fingers lie at residues His-1175–Val-1238 and Ala-1295–Asp-1347. Residues Cys-1180, Cys-1183, Cys-1195, Cys-1198, Cys-1204, Cys-1207, His-1220, His-1228, Cys-1300, Cys-1303, Cys-1315, Cys-1318, Cys-1324, Cys-1327, His-1335, and His-1337 each coordinate Zn(2+). The segment at Ser-1358–Leu-1436 adopts a TAZ-type 2 zinc-finger fold.

As to expression, rosette leaves, stems and flowers.

It localises to the nucleus. It carries out the reaction L-lysyl-[protein] + acetyl-CoA = N(6)-acetyl-L-lysyl-[protein] + CoA + H(+). Functionally, acetyltransferase enzyme. Acetylates histones, giving a specific tag for transcriptional activation. The protein is Histone acetyltransferase HAC4 (HAC4) of Arabidopsis thaliana (Mouse-ear cress).